Reading from the N-terminus, the 214-residue chain is Thiamine pyrophosphokinase (214 aa).

Belongs to the thiamine pyrophosphokinase family.

The catalysed reaction is thiamine + ATP = thiamine diphosphate + AMP + H(+). It functions in the pathway cofactor biosynthesis; thiamine diphosphate biosynthesis; thiamine diphosphate from thiamine: step 1/1. Functionally, catalyzes the ATP-dependent phosphorylation of thiamine to thiamine pyrophosphate. Is involved in thiamine salvage. The protein is Thiamine pyrophosphokinase of Bacillus subtilis (strain 168).